The chain runs to 531 residues: Peptide chain release factor 3 (531 aa).

Residues 10–278 form the tr-type G domain; that stretch reads ARRRTFAIIS…DFVEHAPGPL (269 aa). GTP contacts are provided by residues 19-26, 87-91, and 141-144; these read SHPDAGKT, DTPGH, and NKLD.

It belongs to the TRAFAC class translation factor GTPase superfamily. Classic translation factor GTPase family. PrfC subfamily.

It is found in the cytoplasm. Increases the formation of ribosomal termination complexes and stimulates activities of RF-1 and RF-2. It binds guanine nucleotides and has strong preference for UGA stop codons. It may interact directly with the ribosome. The stimulation of RF-1 and RF-2 is significantly reduced by GTP and GDP, but not by GMP. This is Peptide chain release factor 3 from Thioalkalivibrio sulfidiphilus (strain HL-EbGR7).